The chain runs to 212 residues: ATP-dependent dethiobiotin synthetase BioD (212 aa).

10 to 15 (GVGKTF) serves as a coordination point for ATP. Mg(2+) is bound at residue T14. Residue K36 is part of the active site. S40 lines the substrate pocket. Residues D45, 106–109 (EGAG), and 167–168 (NC) each bind ATP. D45 and E106 together coordinate Mg(2+).

This sequence belongs to the dethiobiotin synthetase family. As to quaternary structure, homodimer. Mg(2+) is required as a cofactor.

It is found in the cytoplasm. It carries out the reaction (7R,8S)-7,8-diammoniononanoate + CO2 + ATP = (4R,5S)-dethiobiotin + ADP + phosphate + 3 H(+). It participates in cofactor biosynthesis; biotin biosynthesis; biotin from 7,8-diaminononanoate: step 1/2. Catalyzes a mechanistically unusual reaction, the ATP-dependent insertion of CO2 between the N7 and N8 nitrogen atoms of 7,8-diaminopelargonic acid (DAPA, also called 7,8-diammoniononanoate) to form a ureido ring. This chain is ATP-dependent dethiobiotin synthetase BioD, found in Methanococcus aeolicus (strain ATCC BAA-1280 / DSM 17508 / OCM 812 / Nankai-3).